The following is a 49-amino-acid chain: Large ribosomal subunit protein bL33B (49 aa).

Belongs to the bacterial ribosomal protein bL33 family.

This Acholeplasma laidlawii (strain PG-8A) protein is Large ribosomal subunit protein bL33B.